Reading from the N-terminus, the 511-residue chain is Ribose import ATP-binding protein RbsA (511 aa).

ABC transporter domains are found at residues 7–242 and 256–500; these read LQIS…VGRE and CSTT…SGTQ. Residue 39-46 coordinates ATP; it reads GENGAGKS.

Belongs to the ABC transporter superfamily. Ribose importer (TC 3.A.1.2.1) family. In terms of assembly, the complex is composed of an ATP-binding protein (RbsA), two transmembrane proteins (RbsC) and a solute-binding protein (RbsB).

Its subcellular location is the cell inner membrane. It carries out the reaction D-ribose(out) + ATP + H2O = D-ribose(in) + ADP + phosphate + H(+). In terms of biological role, part of the ABC transporter complex RbsABC involved in ribose import. Responsible for energy coupling to the transport system. The sequence is that of Ribose import ATP-binding protein RbsA from Ruegeria sp. (strain TM1040) (Silicibacter sp.).